The chain runs to 338 residues: MGAMTASPGRRVLLAAPRGYCAGVDRAVIAVEKALEQYGAPVYVRHEIVHNKYVVQTLEKKGAIFVERTEEVPEGNIVMFSAHGVAPVVHEEAERGKLATIDATCPLVTKVHKEAVRFANDDYDILLIGHEGHEEVIGTSGEAPDHIQLVDGPEDVAKVEVRDPSKVVWLSQTTLSVDETMETVDALKDKFPQLISPPSDDICYATQNRQLAVKQMGAEAELVIVVGSRNSSNSKRLVEVAKQAGSRAAYLVDFADEIDETWLDGVTTVGVTSGASVPDVLVEQVLEWLSRRGFEDVEIVKAAEESIIFSLPKELRRDLREEAASLVAERGGSGTAGA.

Cys-21 is a [4Fe-4S] cluster binding site. (2E)-4-hydroxy-3-methylbut-2-enyl diphosphate is bound by residues His-50 and His-83. Residues His-50 and His-83 each coordinate dimethylallyl diphosphate. The isopentenyl diphosphate site is built by His-50 and His-83. Cys-105 is a [4Fe-4S] cluster binding site. His-133 contributes to the (2E)-4-hydroxy-3-methylbut-2-enyl diphosphate binding site. His-133 provides a ligand contact to dimethylallyl diphosphate. His-133 lines the isopentenyl diphosphate pocket. The active-site Proton donor is Glu-135. Thr-173 is a binding site for (2E)-4-hydroxy-3-methylbut-2-enyl diphosphate. Cys-203 provides a ligand contact to [4Fe-4S] cluster. (2E)-4-hydroxy-3-methylbut-2-enyl diphosphate-binding residues include Ser-231, Ser-232, Asn-233, and Ser-276. Dimethylallyl diphosphate-binding residues include Ser-231, Ser-232, Asn-233, and Ser-276. Positions 231, 232, 233, and 276 each coordinate isopentenyl diphosphate.

The protein belongs to the IspH family. The cofactor is [4Fe-4S] cluster.

It catalyses the reaction isopentenyl diphosphate + 2 oxidized [2Fe-2S]-[ferredoxin] + H2O = (2E)-4-hydroxy-3-methylbut-2-enyl diphosphate + 2 reduced [2Fe-2S]-[ferredoxin] + 2 H(+). It carries out the reaction dimethylallyl diphosphate + 2 oxidized [2Fe-2S]-[ferredoxin] + H2O = (2E)-4-hydroxy-3-methylbut-2-enyl diphosphate + 2 reduced [2Fe-2S]-[ferredoxin] + 2 H(+). Its pathway is isoprenoid biosynthesis; dimethylallyl diphosphate biosynthesis; dimethylallyl diphosphate from (2E)-4-hydroxy-3-methylbutenyl diphosphate: step 1/1. It participates in isoprenoid biosynthesis; isopentenyl diphosphate biosynthesis via DXP pathway; isopentenyl diphosphate from 1-deoxy-D-xylulose 5-phosphate: step 6/6. Its function is as follows. Catalyzes the conversion of 1-hydroxy-2-methyl-2-(E)-butenyl 4-diphosphate (HMBPP) into a mixture of isopentenyl diphosphate (IPP) and dimethylallyl diphosphate (DMAPP). Acts in the terminal step of the DOXP/MEP pathway for isoprenoid precursor biosynthesis. This is 4-hydroxy-3-methylbut-2-enyl diphosphate reductase from Streptomyces coelicolor (strain ATCC BAA-471 / A3(2) / M145).